The chain runs to 882 residues: DNA mismatch repair protein MutS (882 aa).

Glycine 640–serine 647 contacts ATP.

This sequence belongs to the DNA mismatch repair MutS family.

This protein is involved in the repair of mismatches in DNA. It is possible that it carries out the mismatch recognition step. This protein has a weak ATPase activity. This chain is DNA mismatch repair protein MutS, found in Albidiferax ferrireducens (strain ATCC BAA-621 / DSM 15236 / T118) (Rhodoferax ferrireducens).